Reading from the N-terminus, the 352-residue chain is Alanine racemase (352 aa).

The Proton acceptor; specific for D-alanine role is filled by Lys34. Lys34 carries the post-translational modification N6-(pyridoxal phosphate)lysine. Residue Arg126 participates in substrate binding. The active-site Proton acceptor; specific for L-alanine is Tyr248. Substrate is bound at residue Met296.

This sequence belongs to the alanine racemase family. Pyridoxal 5'-phosphate serves as cofactor.

It catalyses the reaction L-alanine = D-alanine. It functions in the pathway amino-acid biosynthesis; D-alanine biosynthesis; D-alanine from L-alanine: step 1/1. Functionally, catalyzes the interconversion of L-alanine and D-alanine. May also act on other amino acids. The protein is Alanine racemase (alr) of Deinococcus deserti (strain DSM 17065 / CIP 109153 / LMG 22923 / VCD115).